The sequence spans 1181 residues: Integrin alpha-7 (1181 aa).

A signal peptide spans 1 to 33 (MAGARSRDPWGASGICYLFGSLLVELLFSRAVA). Residues 34 to 1082 (FNLDVMGALR…MAVVAEGVPW (1049 aa)) are Extracellular-facing. FG-GAP repeat units lie at residues 35-103 (NLDV…ETDC), 110-175 (QGAD…IRDE), 185-238 (EGRP…SADL), 292-349 (DRLP…ASRL), 350-411 (VPEV…HWAG), 412-467 (ISPL…GVVA), and 471-530 (QVLE…IAPR). Asparagine 86 carries an N-linked (GlcNAc...) asparagine glycan. 3 cysteine pairs are disulfide-bonded: cysteine 94–cysteine 103, cysteine 140–cysteine 163, and cysteine 184–cysteine 197. 13 residues coordinate Ca(2+): aspartate 372, asparagine 374, aspartate 376, aspartate 380, aspartate 434, asparagine 436, aspartate 438, aspartate 442, aspartate 492, aspartate 494, asparagine 496, tyrosine 498, and aspartate 500. 6 disulfide bridges follow: cysteine 539-cysteine 546, cysteine 552-cysteine 615, cysteine 681-cysteine 687, cysteine 781-cysteine 792, cysteine 939-cysteine 994, and cysteine 1001-cysteine 1006. Residue asparagine 786 is glycosylated (N-linked (GlcNAc...) asparagine). The segment covering 950-961 (VDSRDRRRRELE) has biased composition (basic and acidic residues). The segment at 950 to 978 (VDSRDRRRRELEPPEQQEPGERQEPSMSW) is disordered. N-linked (GlcNAc...) asparagine glycosylation is present at asparagine 989. N-linked (GlcNAc...) asparagine glycans are attached at residues asparagine 1025 and asparagine 1045. Residues 1083–1103 (WVILLAVLAGLLVLALLVLLL) form a helical membrane-spanning segment. Topologically, residues 1104-1181 (WKMGFFKRAK…PDGHPGPGTA (78 aa)) are cytoplasmic. The GFFKR motif signature appears at 1107–1111 (GFFKR). The segment at 1138-1181 (EKTGTILRNNWGSPRREGPDAHPILAADGHPELGPDGHPGPGTA) is disordered. Repeat copies occupy residues 1157 to 1160 (DAHP), 1165 to 1168 (DGHP), and 1173 to 1176 (DGHP). The 3 X 4 AA repeats of D-X-H-P stretch occupies residues 1157–1176 (DAHPILAADGHPELGPDGHP).

It belongs to the integrin alpha chain family. In terms of assembly, heterodimer of an alpha and a beta subunit. The alpha subunit is composed of a heavy and a light chain linked by a disulfide bond. Alpha-7 associates with beta-1. Interacts with COMP. Interacts (via C-terminus intracellular tail region) with CIB1; the interaction is stabilized/increased in a calcium- and magnesium-dependent manner. ADP-ribosylated on at least two sites of the extracellular domain in skeletal myotubes. Post-translationally, a 70 kDa form is created by proteolytic cleavage. Cleavage is elevated during myogenic differentiation and the cleaved form enhances cell adhesion and spreading on laminin. In terms of tissue distribution, isoforms containing segment A are predominantly expressed in skeletal muscle. Isoforms containing segment B are abundantly expressed in skeletal muscle, moderately in cardiac muscle, small intestine, colon, ovary and prostate and weakly in lung and testes. Isoforms containing segment X2D are expressed at low levels in fetal and adult skeletal muscle and in cardiac muscle, but are not detected in myoblasts and myotubes. In muscle fibers isoforms containing segment A and B are expressed at myotendinous and neuromuscular junctions; isoforms containing segment C are expressed at neuromuscular junctions and at extrasynaptic sites. Isoforms containing segments X1 or X2 or, at low levels, X1X2 are expressed in fetal and adult skeletal muscle (myoblasts and myotubes) and cardiac muscle.

Its subcellular location is the membrane. In terms of biological role, integrin alpha-7/beta-1 is the primary laminin receptor on skeletal myoblasts and adult myofibers. During myogenic differentiation, it may induce changes in the shape and mobility of myoblasts, and facilitate their localization at laminin-rich sites of secondary fiber formation. It is involved in the maintenance of the myofibers cytoarchitecture as well as for their anchorage, viability and functional integrity. Isoform Alpha-7X2B and isoform Alpha-7X1B promote myoblast migration on laminin 1 and laminin 2/4, but isoform Alpha-7X1B is less active on laminin 1 (In vitro). Acts as a Schwann cell receptor for laminin-2. Acts as a receptor of COMP and mediates its effect on vascular smooth muscle cells (VSMCs) maturation. Required to promote contractile phenotype acquisition in differentiated airway smooth muscle (ASM) cells. In Homo sapiens (Human), this protein is Integrin alpha-7 (ITGA7).